The following is a 336-amino-acid chain: Ketol-acid reductoisomerase (NADP(+)) 1 (336 aa).

The 180-residue stretch at 2 to 181 (AKVYYEKDVT…GATRAGVLET (180 aa)) folds into the KARI N-terminal Rossmann domain. Residues 25–28 (YGSQ), Arg-48, Ser-52, and 82–85 (DELQ) each bind NADP(+). The active site involves His-107. Residue Gly-133 coordinates NADP(+). The 146-residue stretch at 182–327 (TFKEETETDL…RKLREMMPFV (146 aa)) folds into the KARI C-terminal knotted domain. The Mg(2+) site is built by Asp-190, Glu-194, Glu-226, and Glu-230. A substrate-binding site is contributed by Ser-251.

This sequence belongs to the ketol-acid reductoisomerase family. The cofactor is Mg(2+).

The enzyme catalyses (2R)-2,3-dihydroxy-3-methylbutanoate + NADP(+) = (2S)-2-acetolactate + NADPH + H(+). It catalyses the reaction (2R,3R)-2,3-dihydroxy-3-methylpentanoate + NADP(+) = (S)-2-ethyl-2-hydroxy-3-oxobutanoate + NADPH + H(+). Its pathway is amino-acid biosynthesis; L-isoleucine biosynthesis; L-isoleucine from 2-oxobutanoate: step 2/4. It functions in the pathway amino-acid biosynthesis; L-valine biosynthesis; L-valine from pyruvate: step 2/4. Involved in the biosynthesis of branched-chain amino acids (BCAA). Catalyzes an alkyl-migration followed by a ketol-acid reduction of (S)-2-acetolactate (S2AL) to yield (R)-2,3-dihydroxy-isovalerate. In the isomerase reaction, S2AL is rearranged via a Mg-dependent methyl migration to produce 3-hydroxy-3-methyl-2-ketobutyrate (HMKB). In the reductase reaction, this 2-ketoacid undergoes a metal-dependent reduction by NADPH to yield (R)-2,3-dihydroxy-isovalerate. This is Ketol-acid reductoisomerase (NADP(+)) 1 from Bacillus thuringiensis subsp. konkukian (strain 97-27).